The sequence spans 117 residues: Large ribosomal subunit protein uL18 (117 aa).

It belongs to the universal ribosomal protein uL18 family. Part of the 50S ribosomal subunit; part of the 5S rRNA/L5/L18/L25 subcomplex. Contacts the 5S and 23S rRNAs.

Functionally, this is one of the proteins that bind and probably mediate the attachment of the 5S RNA into the large ribosomal subunit, where it forms part of the central protuberance. In Thioalkalivibrio sulfidiphilus (strain HL-EbGR7), this protein is Large ribosomal subunit protein uL18.